The following is a 231-amino-acid chain: Response regulator MprA (231 aa).

The Response regulatory domain maps to Arg-4–Leu-118. Position 48 is a 4-aspartylphosphate (Asp-48). Residues Ser-130–Glu-228 constitute a DNA-binding region (ompR/PhoB-type).

In terms of processing, phosphorylated and dephosphorylated by MprB.

Its subcellular location is the cytoplasm. Member of the two-component regulatory system MprB/MprA which contributes to maintaining a balance among several systems involved in stress resistance and is required for establishment and maintenance of persistent infection in the host. Functions as a transcriptional regulator that recognizes a 19-bp nucleotide motif comprizing two loosely conserved 8-bp direct DNA-binding motif repeats separated by a 3-bp spacer region. The chain is Response regulator MprA (mprA) from Mycolicibacterium vanbaalenii (strain DSM 7251 / JCM 13017 / BCRC 16820 / KCTC 9966 / NRRL B-24157 / PYR-1) (Mycobacterium vanbaalenii).